The sequence spans 91 residues: uncharacterized protein (91 aa).

Belongs to the UPF0440 family.

This is an uncharacterized protein from Methanothermobacter thermautotrophicus (strain ATCC 29096 / DSM 1053 / JCM 10044 / NBRC 100330 / Delta H) (Methanobacterium thermoautotrophicum).